The primary structure comprises 441 residues: Methylenetetrahydrofolate--tRNA-(uracil-5-)-methyltransferase TrmFO (441 aa).

Residue 7-12 (GAGLSG) participates in FAD binding.

It belongs to the MnmG family. TrmFO subfamily. FAD is required as a cofactor.

It is found in the cytoplasm. The catalysed reaction is uridine(54) in tRNA + (6R)-5,10-methylene-5,6,7,8-tetrahydrofolate + NADH + H(+) = 5-methyluridine(54) in tRNA + (6S)-5,6,7,8-tetrahydrofolate + NAD(+). The enzyme catalyses uridine(54) in tRNA + (6R)-5,10-methylene-5,6,7,8-tetrahydrofolate + NADPH + H(+) = 5-methyluridine(54) in tRNA + (6S)-5,6,7,8-tetrahydrofolate + NADP(+). Its function is as follows. Catalyzes the folate-dependent formation of 5-methyl-uridine at position 54 (M-5-U54) in all tRNAs. The sequence is that of Methylenetetrahydrofolate--tRNA-(uracil-5-)-methyltransferase TrmFO from Pseudothermotoga lettingae (strain ATCC BAA-301 / DSM 14385 / NBRC 107922 / TMO) (Thermotoga lettingae).